A 397-amino-acid chain; its full sequence is Enoyl-[acyl-carrier-protein] reductase [NADH] FabV (397 aa).

NAD(+)-binding positions include 48-53, 74-75, 111-112, and 139-140; these read GASTGY, FE, DA, and LA. Residue Y225 participates in substrate binding. Y235 acts as the Proton donor in catalysis. Residues K244 and 273 to 275 contribute to the NAD(+) site; that span reads VVT.

The protein belongs to the TER reductase family. In terms of assembly, monomer.

It carries out the reaction a 2,3-saturated acyl-[ACP] + NAD(+) = a (2E)-enoyl-[ACP] + NADH + H(+). The protein operates within lipid metabolism; fatty acid biosynthesis. Resistant to triclosan. Involved in the final reduction of the elongation cycle of fatty acid synthesis (FAS II). Catalyzes the NADH-dependent reduction of the carbon-carbon double bond in the enoyl moiety that is covalently linked to an acyl carrier protein (ACP). The polypeptide is Enoyl-[acyl-carrier-protein] reductase [NADH] FabV (Aeromonas salmonicida (strain A449)).